Consider the following 116-residue polypeptide: Non-specific lipid-transfer protein 10 (116 aa).

A signal peptide spans 1 to 22 (MMRVVLPLCLLLASIFAWGSEA). 4 disulfide bridges follow: Cys-26–Cys-73, Cys-36–Cys-50, Cys-51–Cys-98, and Cys-71–Cys-112.

The protein belongs to the plant LTP family.

In terms of biological role, plant non-specific lipid-transfer proteins transfer phospholipids as well as galactolipids across membranes. May play a role in wax or cutin deposition in the cell walls of expanding epidermal cells and certain secretory tissues. The chain is Non-specific lipid-transfer protein 10 (LTP10) from Arabidopsis thaliana (Mouse-ear cress).